A 521-amino-acid polypeptide reads, in one-letter code: SET and MYND domain-containing protein DDB_G0292140 (521 aa).

The disordered stretch occupies residues 1-101 (MDGVIESPSN…KIKKSKKSIK (101 aa)). A compositionally biased stretch (low complexity) spans 12-55 (TIKISPSTSDSSTTTPIITTPPTQSTATVTTKAAATTTTTEAST). Residues 56-65 (TPPPPQPTPT) show a composition bias toward pro residues. Positions 66–90 (PTQSTATVTKEVETTTETIPPIVTK) are enriched in low complexity. Residues 91-101 (GKIKKSKKSIK) are compositionally biased toward basic residues. The SET domain maps to 122–406 (WPIHVYSHPI…EGDELTISYI (285 aa)). Zn(2+) contacts are provided by C167, C170, C188, C191, C197, C201, H209, and C213. An MYND-type zinc finger spans residues 167–213 (CQHCFLEVPLNQQILPTDFYMCEGCQRVGYCSANCRCIDYSQHRFEC). Residues 442–521 (QTGTLEKDDD…QDHQNNDKSN (80 aa)) form a disordered region. A compositionally biased stretch (acidic residues) spans 448-469 (KDDDDNDDEKEKMDEDDDEKDD). Residues 470–485 (DINNKNDKKSKYKSDG) show a composition bias toward basic and acidic residues. Positions 486–495 (STDDEEDEDN) are enriched in acidic residues. The segment covering 497–514 (NNKNNNKNKNNNSNNQDH) has biased composition (low complexity).

This sequence belongs to the class V-like SAM-binding methyltransferase superfamily.

Functionally, probable methyltransferase. The protein is SET and MYND domain-containing protein DDB_G0292140 of Dictyostelium discoideum (Social amoeba).